The sequence spans 410 residues: 45 kDa immediate-early protein 2 (410 aa).

A disordered region spans residues 36–166 (SEEEQGEEVE…SKRISELDNE (131 aa)). Low complexity-rich tracts occupy residues 47-67 (RGAT…TSPT), 90-101 (SSSSSSCSSASD), and 132-147 (AASS…SSGG). Residues 257–283 (VRCRLGTMCNLALSTPFLMEHTMPVTH) fold into a zinc finger.

Its function is as follows. Activates the E1.7 promoter. This activation is augmented by the IE1 protein. It down-regulates the transcription of genes under the control of the major IE promoter. The protein is 45 kDa immediate-early protein 2 (UL122) of Homo sapiens (Human).